A 370-amino-acid chain; its full sequence is DNA polymerase IV (370 aa).

In terms of domain architecture, UmuC spans 14-198 (IIHIDMDAFF…LPIEKFYGVG (185 aa)). Positions 18 and 116 each coordinate Mg(2+). E117 is a catalytic residue.

The protein belongs to the DNA polymerase type-Y family. Monomer. Requires Mg(2+) as cofactor.

The protein resides in the cytoplasm. The enzyme catalyses DNA(n) + a 2'-deoxyribonucleoside 5'-triphosphate = DNA(n+1) + diphosphate. Functionally, poorly processive, error-prone DNA polymerase involved in untargeted mutagenesis. Copies undamaged DNA at stalled replication forks, which arise in vivo from mismatched or misaligned primer ends. These misaligned primers can be extended by PolIV. Exhibits no 3'-5' exonuclease (proofreading) activity. May be involved in translesional synthesis, in conjunction with the beta clamp from PolIII. The chain is DNA polymerase IV from Streptococcus mutans serotype c (strain ATCC 700610 / UA159).